The following is a 199-amino-acid chain: MSENNGFFLVLEGIDGAGKTSIAFKLRDFLVEKGFNVHYTYEPYNTLYVEALKKKYNEYRDAYLDALTYAADRLVHIRTEILPYLRRGYIVICDRYYYSSAAYQSAQGAPIEWVLEINKYALKPDLTIYLDVDPAIGVKRRKGLNTRFPEYEKLDFLYRVRENYLWLVDKGYMVLVDANREFDKVYRDVEKIVLEHLVF.

Residue 13 to 20 (GIDGAGKT) participates in ATP binding.

Belongs to the thymidylate kinase family.

It catalyses the reaction dTMP + ATP = dTDP + ADP. The protein is Probable thymidylate kinase of Staphylothermus marinus (strain ATCC 43588 / DSM 3639 / JCM 9404 / F1).